We begin with the raw amino-acid sequence, 818 residues long: Dipeptidyl-peptidase 7 (818 aa).

The first 22 residues, 1-22 (MKLKRILLSVALLCGIGTTAMA), serve as a signal peptide directing secretion. Residues His87, Asp223, and Ser645 each act as charge relay system in the active site.

It belongs to the peptidase S46 family.

In terms of biological role, catalyzes the removal of dipeptides from the N-terminus of oligopeptides. Most efficiently cleaves the synthetic substrate Met-Leu-methylcoumaryl-7-amide (Met-Leu-MCA), and slowly hydrolyzes Leu-Gln-, Lys-Ala-, Leu-Arg, and Ala-Asn-MCA. Is likely involved in amino acid metabolism and bacterial growth/survival of asaccharolytic P.endodontalis, that utilizes amino acids from extracellular proteinaceous nutrients as energy and carbon sources. The protein is Dipeptidyl-peptidase 7 of Porphyromonas endodontalis (strain ATCC 35406 / DSM 24491 / JCM 8526 / CCUG 16442 / BCRC 14492 / NCTC 13058 / HG 370) (Bacteroides endodontalis).